A 573-amino-acid chain; its full sequence is Excitatory amino acid transporter 2 (573 aa).

A compositionally biased stretch (polar residues) spans 1–11 (MASTEGANNMP). The interval 1 to 29 (MASTEGANNMPKQVEVRMHDSHLSSEEPK) is disordered. Topologically, residues 1–44 (MASTEGANNMPKQVEVRMHDSHLSSEEPKHRNLGMRMCDKLGKN) are cytoplasmic. Residues S3, S21, S24, and S25 each carry the phosphoserine modification. The span at 14 to 29 (VEVRMHDSHLSSEEPK) shows a compositional bias: basic and acidic residues. A lipid anchor (S-palmitoyl cysteine) is attached at C38. Transmembrane regions (helical) follow at residues 45–64 (LLLSLTVFGVILGAVCGGLL), 88–108 (MLKMLILPLIISSLITGLSGL), and 121–142 (MVYYMSTTIIAAVLGVILVLAI). 2 N-linked (GlcNAc...) asparagine glycosylation sites follow: N205 and N215. 3 consecutive transmembrane segments (helical) span residues 235 to 258 (FKDGMNVLGLIGFFIAFGIAMGKM), 268 to 295 (FFNILNEIVMKLVIMIMWYSPLGIACLI), and 317 to 338 (ITVIVGLIIHGGIFLPLIYFVV). Positions 344 to 374 (FSFFAGIFQAWITALGTASSAGTLPVTFRCL) form an intramembrane region, discontinuously helical. 361 to 363 (ASS) lines the L-aspartate pocket. A helical membrane pass occupies residues 384–410 (VTRFVLPVGATINMDGTALYEAVAAIF). Na(+) is bound by residues G392, T394, and N396. L-aspartate-binding positions include T400, 441–445 (IPSAG), D474, and N481. The discontinuously helical intramembrane region spans 424 to 457 (IVTVSLTATLASIGAASIPSAGLVTMLLILTAVG). A helical transmembrane segment spans residues 471–492 (WLLDRMRTSVNVVGDSFGAGIV). Residues N481 and D485 each coordinate Na(+). Residues S505, S520, S531, and S533 each carry the phosphoserine modification. Y538 is subject to Phosphotyrosine. Residues S543, S559, and S563 each carry the phosphoserine modification.

It belongs to the dicarboxylate/amino acid:cation symporter (DAACS) (TC 2.A.23) family. SLC1A2 subfamily. In terms of assembly, homotrimer. Interacts with AJUBA. Post-translationally, glycosylated. In terms of processing, palmitoylation at Cys-38 is not required for correct subcellular localization, but is important for glutamate uptake activity. As to expression, localized in brain and is highly enriched in the Purkinje cell layer in cerebellum.

Its subcellular location is the cell membrane. The enzyme catalyses K(+)(in) + L-glutamate(out) + 3 Na(+)(out) + H(+)(out) = K(+)(out) + L-glutamate(in) + 3 Na(+)(in) + H(+)(in). The catalysed reaction is D-aspartate(out) + K(+)(in) + 3 Na(+)(out) + H(+)(out) = D-aspartate(in) + K(+)(out) + 3 Na(+)(in) + H(+)(in). It carries out the reaction K(+)(in) + L-aspartate(out) + 3 Na(+)(out) + H(+)(out) = K(+)(out) + L-aspartate(in) + 3 Na(+)(in) + H(+)(in). Sodium-dependent, high-affinity amino acid transporter that mediates the uptake of L-glutamate and also L-aspartate and D-aspartate. Functions as a symporter that transports one amino acid molecule together with two or three Na(+) ions and one proton, in parallel with the counter-transport of one K(+) ion. Mediates Cl(-) flux that is not coupled to amino acid transport; this avoids the accumulation of negative charges due to aspartate and Na(+) symport. Essential for the rapid removal of released glutamate from the synaptic cleft, and for terminating the postsynaptic action of glutamate. This is Excitatory amino acid transporter 2 (Slc1a2) from Rattus norvegicus (Rat).